We begin with the raw amino-acid sequence, 808 residues long: Glutamate receptor 1.1 (808 aa).

Residues 1–19 form the signal peptide; that stretch reads MEILFSISILALLFSGVVA. Residues 20-541 lie on the Extracellular side of the membrane; the sequence is APSDDDVFEE…MWTFFDPFEK (522 aa). N288, N339, and N504 each carry an N-linked (GlcNAc...) asparagine glycan. A helical transmembrane segment spans residues 542–562; that stretch reads SLWLASGAFFVLTGIVVWLVE. The Cytoplasmic portion of the chain corresponds to 563 to 570; it reads RSVNPEFQ. The chain crosses the membrane as a helical span at residues 571-591; sequence GSWGQQLSMMLWFGFSTIVFA. Topologically, residues 592 to 602 are cytoplasmic; that stretch reads HREKLQKMSSR. The chain crosses the membrane as a helical span at residues 603–623; sequence FLVIVWVFVVLILTSSYSANL. Residues 624-771 lie on the Extracellular side of the membrane; the sequence is TSTKTISRMQ…SKRFTFRELR (148 aa). A helical membrane pass occupies residues 772–792; that stretch reads GLFIIAGAAHVLVLALHLFHT. Topologically, residues 793–808 are cytoplasmic; that stretch reads RQEVSRLCTKLQSFYK.

It belongs to the glutamate-gated ion channel (TC 1.A.10.1) family. May form heteromers. In terms of tissue distribution, expressed predominantly in roots. First detected in the root-shoot junction, and later in lateral roots and at the margin of matures leaves.

It is found in the membrane. Its function is as follows. Glutamate-gated receptor that probably acts as a non-selective cation channel. Can transport sodium, potassium, and calcium ions. Functions as a carbon and nitrogen regulator and/or sensor that regulates carbon and nitrogen metabolism and distinct physiological process such as germination through the control of acid abscisic (ABA) biosynthesis. May be involved in light-signal transduction and calcium homeostasis via the regulation of calcium influx into cells. Seems required for the regulation of the abscisic acid (ABA) signaling pathway that modulates many aspects of plant physiology such as seed germination and response to drought (e.g. stomata opening). This Arabidopsis thaliana (Mouse-ear cress) protein is Glutamate receptor 1.1 (GLR1.1).